A 745-amino-acid chain; its full sequence is uncharacterized protein (745 aa).

The HTH araC/xylS-type domain maps to 158-256 (NQVCDYIELH…HQTPKQYRGD (99 aa)). 2 consecutive DNA-binding regions (H-T-H motif) follow at residues 175–196 (SELS…AESL) and 223–246 (ITDI…KHIT).

This is an uncharacterized protein from Staphylococcus aureus.